The chain runs to 313 residues: Guanine nucleotide-binding protein-like 3-like protein (313 aa).

The segment covering 1–14 has biased composition (basic residues); it reads MGIKKKRQSKRLTT. The segment at 1-41 is disordered; that stretch reads MGIKKKRQSKRLTTRKREGMLKRARANERKKRRMDRKMQAK. A compositionally biased stretch (basic and acidic residues) spans 15-27; the sequence is RKREGMLKRARAN. GTP is bound by residues 95–98, 178–185, and 212–215; these read SKSD, GNPGSGKN, and TLSS.

It belongs to the MMR1/HSR1 GTP-binding protein family.

It is found in the nucleus. It localises to the nucleolus. Required for normal processing of ribosomal pre-rRNA. Required for cell proliferation. Binds GTP. This is Guanine nucleotide-binding protein-like 3-like protein from Encephalitozoon cuniculi (strain GB-M1) (Microsporidian parasite).